A 345-amino-acid chain; its full sequence is Skn-1 dependent zygotic transcript 15 protein (345 aa).

An F-box domain is found at Ala-11–Val-55.

Functionally, may have a role in embryogenesis. In Caenorhabditis elegans, this protein is Skn-1 dependent zygotic transcript 15 protein (sdz-15).